A 576-amino-acid polypeptide reads, in one-letter code: (+)-alpha-terpineol synthase (576 aa).

Arg286, Asp323, Asp327, Arg466, and Asn469 together coordinate (2E)-geranyl diphosphate. The Mg(2+) site is built by Asp323 and Asp327. The short motif at Asp323–Asp327 is the DDXXD motif element. Positions 469, 473, and 477 each coordinate Mg(2+).

It belongs to the terpene synthase family. Tpsb subfamily. Mg(2+) serves as cofactor. It depends on Mn(2+) as a cofactor.

The catalysed reaction is (2E)-geranyl diphosphate + H2O = (R)-alpha-terpineol + diphosphate. In terms of biological role, monoterpene synthase producing mainly (+)-alpha-terpineol (44%) and (-)-limonene (33.6%) and lower amounts of (E)-geraniol (5.9%), linalool (5.0%), myrcene (3.4%), (-)-alpha-pinene (3.3%), (+)-sabinene (3.0%) and alpha-terpinolene (1.6%). The protein is (+)-alpha-terpineol synthase of Santalum album (White sandalwood).